Reading from the N-terminus, the 74-residue chain is ATP synthase subunit 9, mitochondrial (74 aa).

The next 2 membrane-spanning stretches (helical) occupy residues 8 to 28 (MGAG…GNVF) and 50 to 70 (ILGF…AFLI).

Belongs to the ATPase C chain family. F-type ATPases have 2 components, CF(1) - the catalytic core - and CF(0) - the membrane proton channel. CF(1) has five subunits: alpha(3), beta(3), gamma(1), delta(1), epsilon(1). CF(0) has three main subunits: a, b and c.

The protein localises to the mitochondrion membrane. This protein is one of the chains of the nonenzymatic membrane component (F0) of mitochondrial ATPase. This chain is ATP synthase subunit 9, mitochondrial (ATP9), found in Solanum tuberosum (Potato).